The following is a 395-amino-acid chain: Succinyl-diaminopimelate desuccinylase (395 aa).

H74 serves as a coordination point for Zn(2+). The active site involves D76. D107 is a Zn(2+) binding site. E141 (proton acceptor) is an active-site residue. E142, E170, and H368 together coordinate Zn(2+).

It belongs to the peptidase M20A family. DapE subfamily. In terms of assembly, homodimer. It depends on Zn(2+) as a cofactor. Co(2+) serves as cofactor.

The catalysed reaction is N-succinyl-(2S,6S)-2,6-diaminopimelate + H2O = (2S,6S)-2,6-diaminopimelate + succinate. It functions in the pathway amino-acid biosynthesis; L-lysine biosynthesis via DAP pathway; LL-2,6-diaminopimelate from (S)-tetrahydrodipicolinate (succinylase route): step 3/3. Catalyzes the hydrolysis of N-succinyl-L,L-diaminopimelic acid (SDAP), forming succinate and LL-2,6-diaminopimelate (DAP), an intermediate involved in the bacterial biosynthesis of lysine and meso-diaminopimelic acid, an essential component of bacterial cell walls. The chain is Succinyl-diaminopimelate desuccinylase from Brucella melitensis biotype 1 (strain ATCC 23456 / CCUG 17765 / NCTC 10094 / 16M).